Here is a 1748-residue protein sequence, read N- to C-terminus: Anaphase-promoting complex subunit 1 (1748 aa).

2 disordered regions span residues M1–D24 and V1435–A1479. The segment covering V1435 to N1450 has biased composition (polar residues). The segment covering S1451–S1468 has biased composition (basic and acidic residues). A Phosphoserine modification is found at S1462.

This sequence belongs to the APC1 family. The APC/C is composed of at least 13 subunits that stay tightly associated throughout the cell cycle: APC1, APC2, APC4, APC5, APC9, APC11, CDC16, CDC23, CDC26, CDC27, DOC1, MND2 and SWM1. APC1 interacts directly with MND2.

The protein resides in the nucleus. It is found in the cytoplasm. Its subcellular location is the cytoskeleton. The protein localises to the spindle pole. Its pathway is protein modification; protein ubiquitination. Component of the anaphase promoting complex/cyclosome (APC/C), a cell cycle-regulated E3 ubiquitin-protein ligase complex that controls progression through mitosis and the G1 phase of the cell cycle. The APC/C is thought to confer substrate specificity and, in the presence of ubiquitin-conjugating E2 enzymes, it catalyzes the formation of protein-ubiquitin conjugates that are subsequently degraded by the 26S proteasome. In early mitosis, the APC/C is activated by CDC20 and targets securin PDS1, the B-type cyclin CLB5, and other anaphase inhibitory proteins for proteolysis, thereby triggering the separation of sister chromatids at the metaphase-to-anaphase transition. In late mitosis and in G1, degradation of CLB5 allows activation of the APC/C by CDH1, which is needed to destroy CDC20 and the B-type cyclin CLB2 to allow exit from mitosis and creating the low CDK state necessary for cytokinesis and for reforming prereplicative complexes in G1 prior to another round of replication. In Saccharomyces cerevisiae (strain ATCC 204508 / S288c) (Baker's yeast), this protein is Anaphase-promoting complex subunit 1 (APC1).